We begin with the raw amino-acid sequence, 142 residues long: Prefoldin subunit alpha (142 aa).

This sequence belongs to the prefoldin subunit alpha family. In terms of assembly, heterohexamer of two alpha and four beta subunits.

The protein localises to the cytoplasm. In terms of biological role, molecular chaperone capable of stabilizing a range of proteins. Seems to fulfill an ATP-independent, HSP70-like function in archaeal de novo protein folding. This is Prefoldin subunit alpha from Methanosarcina mazei (strain ATCC BAA-159 / DSM 3647 / Goe1 / Go1 / JCM 11833 / OCM 88) (Methanosarcina frisia).